A 335-amino-acid chain; its full sequence is MTEGNFVDYTKIYVSSGKGGKGSTHLHREKFIEKGGPDGGDGGRGGHVYLVGEKSLWTLFHLKFARHVKAGHGGDGGSSRSTGSDGEDKYIEVPLGTVVRDKETNEILFEITEHGEKRIIAEGGKGGLGNWHFRSSTNQTPRYSQPGLPAQEADIVLELKVLADVGLVGFPNAGKSTLLSVLTSAKPKIADYPFTTLKPNLGIVAYRDYQSFVIADIPGIIEGAAEGKGLGHYFLRHIERNSTLLFLVPADADDIKKEYDILLDELRRYNPEMLDKDRLIVVSKCDMLDEELQVEMKKQLDKDFAGIPYLFISSIAQQGLVELKDKLWAMLNVEA.

An Obg domain is found at 4 to 162 (GNFVDYTKIY…ADIVLELKVL (159 aa)). The OBG-type G domain maps to 163 to 332 (ADVGLVGFPN…LKDKLWAMLN (170 aa)). GTP-binding positions include 169 to 176 (GFPNAGKS), 194 to 198 (FTTLK), 216 to 219 (DIPG), 283 to 286 (SKCD), and 313 to 315 (SSI). Mg(2+)-binding residues include S176 and T196.

This sequence belongs to the TRAFAC class OBG-HflX-like GTPase superfamily. OBG GTPase family. As to quaternary structure, monomer. Requires Mg(2+) as cofactor.

The protein resides in the cytoplasm. Its function is as follows. An essential GTPase which binds GTP, GDP and possibly (p)ppGpp with moderate affinity, with high nucleotide exchange rates and a fairly low GTP hydrolysis rate. Plays a role in control of the cell cycle, stress response, ribosome biogenesis and in those bacteria that undergo differentiation, in morphogenesis control. This chain is GTPase Obg, found in Flavobacterium psychrophilum (strain ATCC 49511 / DSM 21280 / CIP 103535 / JIP02/86).